Reading from the N-terminus, the 585-residue chain is MAEAATGFLEQLKSCIVWSWTYLWTVWFFIVLFLVYILRVPLKINDNLSTVSMFLNTLTPKFYVALTGTSSLISGLILIFEWWYFRKYGTSFIEQVSVSHLRPLLGGVDNNSSNNSNSSNGDSDSNRQSVSECKVWRNPLNLFRGAEYNRYTWVTGREPLTYYDMNLSAQDHQTFFTCDSDHLRPADAIMQKAWRERNPQARISAAHEALEINEIRSRVEVPLIASSTIWEIKLLPKCATAYILLAEEEATTIAEAEKLFKQALKAGDGCYRRSQQLQHHGSQYEAQHRRDTNVLVYIKRRLAMCARRLGRTREAVKMMRDLMKEFPLLSMFNIHENLLEALLELQAYADVQAVLAKYDDISLPKSATICYTAALLKARAVSDKFSPEAASRRGLSTAEMNAVEAIHRAVEFNPHVPKYLLEMKSLILPPEHILKRGDSEAIAYAFFHLAHWKRVEGALNLLHCTWEGTFRMIPYPLEKGHLFYPYPICTETADRELLPSFHEVSVYPKKELPFFILFTAGLCSFTAMLALLTHQFPELMGVFAKAMIDIFYSTELRDWNCKSIFMRIEDELEIPPAPQSQHFPN.

A helical transmembrane segment spans residues 15–35; that stretch reads CIVWSWTYLWTVWFFIVLFLV. Asn-47 is a glycosylation site (N-linked (GlcNAc...) asparagine). Residues 62-82 traverse the membrane as a helical segment; that stretch reads FYVALTGTSSLISGLILIFEW. Position 386 is a phosphoserine (Ser-386). Residues 512–532 form a helical membrane-spanning segment; it reads LPFFILFTAGLCSFTAMLALL.

Belongs to the ST7 family.

It is found in the membrane. The protein is Suppressor of tumorigenicity 7 protein (ST7) of Microcebus murinus (Gray mouse lemur).